The following is a 349-amino-acid chain: MITIAVDCMGGDHGPRVTLPACRHFLDRHADAQLLLVGRPESLGAFSHQRAKTVAASEVVSMDDPLEVALRRKKDSSMRVAIQQVKDGAAQAAVSAGNTAALMAISRYLLKTLDGIDRPAIAGQIPNAKGEATTVLDMGANVDCSAEHLLQFAMMGSALVSVLNGKDSPSVGLLNIGEEAIKGNEVIKKAGELLRSASKAGDLNFYGNVEGNDIFKGTADIVVCDGFVGNVALKASEGLATMIVDFLKMEFSRSIFTKFAAIAAYPIISALKKRMDHRRYNGGALLGLRGLVFKSHGSADELAFEYALTRAYDAARNNLLDRVQARIAHAAPLWGASGRSVPSGAAVPV.

Belongs to the PlsX family. In terms of assembly, homodimer. Probably interacts with PlsY.

Its subcellular location is the cytoplasm. The catalysed reaction is a fatty acyl-[ACP] + phosphate = an acyl phosphate + holo-[ACP]. It functions in the pathway lipid metabolism; phospholipid metabolism. Catalyzes the reversible formation of acyl-phosphate (acyl-PO(4)) from acyl-[acyl-carrier-protein] (acyl-ACP). This enzyme utilizes acyl-ACP as fatty acyl donor, but not acyl-CoA. The polypeptide is Phosphate acyltransferase (Albidiferax ferrireducens (strain ATCC BAA-621 / DSM 15236 / T118) (Rhodoferax ferrireducens)).